We begin with the raw amino-acid sequence, 489 residues long: Bridging integrator 2 (489 aa).

The BAR domain occupies 28 to 244; it reads VLQKLGKTVE…MSKLEKQHSN (217 aa). A compositionally biased stretch (low complexity) spans 267–302; the sequence is QSCAASSPVSPVSPVSPVTSPTSPSATSEPESVSAT. The disordered stretch occupies residues 267–489; the sequence is QSCAASSPVS…ASGGLVGLFL (223 aa). Phosphoserine is present on S273. Over residues 311–331 the composition is skewed to acidic residues; that stretch reads GGEDSCESQESLKDEEADEAQ. The residue at position 357 (S357) is a Phosphoserine. Residues 358 to 368 show a composition bias toward low complexity; the sequence is QEEALSSSAQS. Residues S380, S392, S420, S422, S424, S430, S435, S439, and S443 each carry the phosphoserine modification.

Homodimer. Interacts with BIN1. Interacts with ARHGEF6 (via SH3 domain), ARHGEF7 (via SH3 domain), SH3GL1, SH3GL2 and SH3GL3. Identified in a complex with ARHGEF6 and GIT2.

It localises to the cytoplasm. Its subcellular location is the cell projection. The protein localises to the podosome membrane. It is found in the cell cortex. The protein resides in the phagocytic cup. Promotes cell motility and migration, probably via its interaction with the cell membrane and with podosome proteins that mediate interaction with the cytoskeleton. Modulates membrane curvature and mediates membrane tubulation. Inhibits phagocytosis. Plays a role in podosome formation. The chain is Bridging integrator 2 (Bin2) from Mus musculus (Mouse).